Here is a 349-residue protein sequence, read N- to C-terminus: Hydroxymethylglutaryl-CoA synthase (349 aa).

(3S)-3-hydroxy-3-methylglutaryl-CoA-binding residues include aspartate 30 and alanine 31. The Proton donor/acceptor role is filled by glutamate 82. Positions 114 and 155 each coordinate (3S)-3-hydroxy-3-methylglutaryl-CoA. Cysteine 114 serves as the catalytic Acyl-thioester intermediate. Arginine 203 provides a ligand contact to CoA. Threonine 205 and histidine 238 together coordinate (3S)-3-hydroxy-3-methylglutaryl-CoA. Histidine 238 functions as the Proton donor/acceptor in the catalytic mechanism. Lysine 243 contributes to the CoA binding site. Residues asparagine 270 and serine 300 each coordinate (3S)-3-hydroxy-3-methylglutaryl-CoA.

This sequence belongs to the thiolase-like superfamily. Archaeal HMG-CoA synthase family. As to quaternary structure, interacts with acetoacetyl-CoA thiolase that catalyzes the precedent step in the pathway and with a DUF35 protein. The acetoacetyl-CoA thiolase/HMG-CoA synthase complex channels the intermediate via a fused CoA-binding site, which allows for efficient coupling of the endergonic thiolase reaction with the exergonic HMGCS reaction.

The enzyme catalyses acetoacetyl-CoA + acetyl-CoA + H2O = (3S)-3-hydroxy-3-methylglutaryl-CoA + CoA + H(+). It functions in the pathway metabolic intermediate biosynthesis; (R)-mevalonate biosynthesis; (R)-mevalonate from acetyl-CoA: step 2/3. In terms of biological role, catalyzes the condensation of acetyl-CoA with acetoacetyl-CoA to form 3-hydroxy-3-methylglutaryl-CoA (HMG-CoA). Functions in the mevalonate (MVA) pathway leading to isopentenyl diphosphate (IPP), a key precursor for the biosynthesis of isoprenoid compounds that are building blocks of archaeal membrane lipids. The chain is Hydroxymethylglutaryl-CoA synthase from Methanococcus maripaludis (strain C7 / ATCC BAA-1331).